Consider the following 71-residue polypeptide: Probable ribosome maturation protein RlbA (71 aa).

The S4 RNA-binding domain occupies I12–V69.

In terms of biological role, may assist in the assembly of the 50S subunit. The chain is Probable ribosome maturation protein RlbA from Bacillus subtilis (strain 168).